The following is a 178-amino-acid chain: ATP-dependent protease subunit HslV (178 aa).

Threonine 7 is a catalytic residue. Glycine 162, cysteine 165, and threonine 168 together coordinate Na(+).

This sequence belongs to the peptidase T1B family. HslV subfamily. In terms of assembly, a double ring-shaped homohexamer of HslV is capped on each side by a ring-shaped HslU homohexamer. The assembly of the HslU/HslV complex is dependent on binding of ATP.

The protein localises to the cytoplasm. It catalyses the reaction ATP-dependent cleavage of peptide bonds with broad specificity.. Allosterically activated by HslU binding. Protease subunit of a proteasome-like degradation complex believed to be a general protein degrading machinery. The chain is ATP-dependent protease subunit HslV from Ralstonia nicotianae (strain ATCC BAA-1114 / GMI1000) (Ralstonia solanacearum).